The following is a 660-amino-acid chain: Long chain acyl-CoA synthetase 1 (660 aa).

Residue 225-236 (IMYTSGTSGDPK) participates in ATP binding. The fatty acid-binding stretch occupies residues 492-516 (DGWFHTGDIGEILPNGVLKIIDRKK).

Belongs to the ATP-dependent AMP-binding enzyme family. Mg(2+) is required as a cofactor. As to expression, epidermal-specific expression along the entire stem. In cauline leaves, was expressed over the entire leaf surface, most strongly in trichomes and guard cells, but not in mesophyll cells. In flowers, the expression was detected in the stigma and filaments of the stamens, and in the carpel was expressed specifically in ovaries. In roots, was expressed in primary and lateral roots, but not in the root tips.

It is found in the endoplasmic reticulum. The catalysed reaction is a long-chain fatty acid + ATP + CoA = a long-chain fatty acyl-CoA + AMP + diphosphate. The protein operates within lipid metabolism; fatty acid metabolism. Activation of long-chain fatty acids for both synthesis of cellular lipids, and degradation via beta-oxidation. Acts in both the wax and cutin pathways. Preferentially uses palmitate, palmitoleate, linoleate and eicosenoate. Seems to have a specific activity against very long-chain fatty acid (VLCFA) class with acids longer than 24 carbons (C(24)). This Arabidopsis thaliana (Mouse-ear cress) protein is Long chain acyl-CoA synthetase 1 (LACS1).